The chain runs to 148 residues: Aspartate carbamoyltransferase regulatory chain (148 aa).

Residues cysteine 106, cysteine 111, cysteine 134, and cysteine 137 each coordinate Zn(2+).

It belongs to the PyrI family. Contains catalytic and regulatory chains. Requires Zn(2+) as cofactor.

Its function is as follows. Involved in allosteric regulation of aspartate carbamoyltransferase. This Methanococcus vannielii (strain ATCC 35089 / DSM 1224 / JCM 13029 / OCM 148 / SB) protein is Aspartate carbamoyltransferase regulatory chain.